The sequence spans 1772 residues: Merozoite surface protein 1 (1772 aa).

Residues 1–18 (MKVIGLLFSFVFFAIKCK) form the signal peptide. N-linked (GlcNAc...) asparagine glycosylation occurs at asparagine 54. Residues 290–319 (TGGQSSTEPGSGGSSASGTSSSGQASAGTG) form a disordered region. Low complexity predominate over residues 305-319 (ASGTSSSGQASAGTG). N-linked (GlcNAc...) asparagine glycans are attached at residues asparagine 406 and asparagine 646. The tract at residues 703–796 (KERMEQGPAI…QPSQAASSTT (94 aa)) is disordered. Residues 724–796 (SAESSTDRST…QPSQAASSTT (73 aa)) show a composition bias toward low complexity. A glycan (N-linked (GlcNAc...) asparagine) is linked at asparagine 829. Residues 924–1070 (AAPTPVTPAA…SRAESEEDMP (147 aa)) are disordered. Low complexity-rich tracts occupy residues 930–946 (TPAA…PDVQ) and 956–1052 (SQQP…NSQS). 2 N-linked (GlcNAc...) asparagine glycosylation sites follow: asparagine 1018 and asparagine 1090. The disordered stretch occupies residues 1362–1383 (GAVPGSGTDTRVAGSSVDDNED). Asparagine 1408, asparagine 1446, asparagine 1541, and asparagine 1629 each carry an N-linked (GlcNAc...) asparagine glycan. EGF-like domains follow at residues 1661–1703 (HVCV…VENN) and 1704–1752 (NPTC…FCSS). A disulfide bond links cysteine 1663 and cysteine 1675. A glycan (N-linked (GlcNAc...) asparagine) is linked at asparagine 1680. 4 disulfide bridges follow: cysteine 1687-cysteine 1699, cysteine 1707-cysteine 1720, cysteine 1714-cysteine 1734, and cysteine 1736-cysteine 1750. Residue serine 1751 is the site of GPI-anchor amidated serine attachment. The propeptide at 1752–1772 (SSSFMGLSILLIITLIVFNIF) is removed in mature form.

As to quaternary structure, forms a complex composed of subunits p83, p30, p38, and p42 which remain non-covalently associated; the complex is formed at the merozoite surface prior to egress from host erythrocytes. The p230 precursor is cleaved by SUB1 prior to merozoite egress into 4 subunits p83, p30, p38, and p42 which remain non-covalently associated. In a second processing step during erythrocyte invasion, p42 is cleaved by SUB2 into p33 and p19; the latter remains attached to the merozoite surface via its GPI-anchor and stays on the surface during the subsequent ring stage.

It is found in the cell membrane. It localises to the secreted. During the asexual blood stage, involved in merozoite egress from host erythrocytes possibly via its interaction with the host cytoskeleton protein spectrin resulting in the destabilization of the host cytoskeleton and thus leading to erythrocyte cell membrane rupture. Involved in the binding to host erythrocytes and is required for host erythrocyte invasion. The chain is Merozoite surface protein 1 from Plasmodium yoelii yoelii.